Reading from the N-terminus, the 167-residue chain is UTP pyrophosphatase (167 aa).

The catalysed reaction is UTP + H2O = UMP + diphosphate + H(+). Functionally, specifically catalyzes the hydrolysis of UTP to UMP and diphosphate in vitro, albeit at apparently slow rate. Shows no activity towards ATP, GTP, CTP, dTTP and ITP as substrates. This chain is UTP pyrophosphatase, found in Escherichia coli (strain K12).